A 776-amino-acid chain; its full sequence is Mitochondrial intermediate peptidase (776 aa).

The transit peptide at Met-1–Leu-28 directs the protein to the mitochondrion. Positions Asp-48–Tyr-71 are disordered. The segment covering Ser-53–Tyr-71 has biased composition (polar residues). His-567 serves as a coordination point for Zn(2+). The active site involves Glu-568. The Zn(2+) site is built by His-571 and His-574.

The protein belongs to the peptidase M3 family. Zn(2+) serves as cofactor.

The protein localises to the mitochondrion matrix. The enzyme catalyses Release of an N-terminal octapeptide as second stage of processing of some proteins imported into the mitochondrion.. In terms of biological role, cleaves proteins, imported into the mitochondrion, to their mature size. While most mitochondrial precursor proteins are processed to the mature form in one step by mitochondrial processing peptidase (MPP), the sequential cleavage by MIP of an octapeptide after initial processing by MPP is a required step for a subgroup of nuclear-encoded precursor proteins destined for the matrix or the inner membrane. The sequence is that of Mitochondrial intermediate peptidase (OCT1) from Eremothecium gossypii (strain ATCC 10895 / CBS 109.51 / FGSC 9923 / NRRL Y-1056) (Yeast).